The chain runs to 487 residues: Glutamyl-tRNA(Gln) amidotransferase subunit A (487 aa).

Active-site charge relay system residues include Lys79 and Ser158. Ser182 functions as the Acyl-ester intermediate in the catalytic mechanism.

This sequence belongs to the amidase family. GatA subfamily. Heterotrimer of A, B and C subunits.

It carries out the reaction L-glutamyl-tRNA(Gln) + L-glutamine + ATP + H2O = L-glutaminyl-tRNA(Gln) + L-glutamate + ADP + phosphate + H(+). Its function is as follows. Allows the formation of correctly charged Gln-tRNA(Gln) through the transamidation of misacylated Glu-tRNA(Gln) in organisms which lack glutaminyl-tRNA synthetase. The reaction takes place in the presence of glutamine and ATP through an activated gamma-phospho-Glu-tRNA(Gln). The sequence is that of Glutamyl-tRNA(Gln) amidotransferase subunit A from Ehrlichia ruminantium (strain Welgevonden).